The following is a 316-amino-acid chain: GMP reductase (316 aa).

Cys-175 functions as the Thioimidate intermediate in the catalytic mechanism. 202–225 (VIADGGIVEHGDIAKALVCGATMV) is a binding site for NADP(+).

It belongs to the IMPDH/GMPR family. GuaC type 2 subfamily.

The enzyme catalyses IMP + NH4(+) + NADP(+) = GMP + NADPH + 2 H(+). In terms of biological role, catalyzes the irreversible NADPH-dependent deamination of GMP to IMP. It functions in the conversion of nucleobase, nucleoside and nucleotide derivatives of G to A nucleotides, and in maintaining the intracellular balance of A and G nucleotides. The chain is GMP reductase from Chromobacterium violaceum (strain ATCC 12472 / DSM 30191 / JCM 1249 / CCUG 213 / NBRC 12614 / NCIMB 9131 / NCTC 9757 / MK).